We begin with the raw amino-acid sequence, 550 residues long: Centrosomal and chromosomal factor (550 aa).

3 coiled-coil regions span residues 20–44, 105–126, and 239–274; these read SALSALQQQQQQQQQQHSQTQQQHH, VANSRQQQQQQQQQQQQQQQQQ, and ATSAQQQQQQQQRYQQQQQQLRQQHQQMSQMSQQAH. Disordered regions lie at residues 21-145, 208-320, 361-380, and 392-465; these read ALSA…KDYS, LSSG…HAAN, SHYAAKGSGGGAGGGKRDAM, and SGKL…SASV. Low complexity-rich tracts occupy residues 24 to 71, 81 to 136, and 221 to 320; these read ALQQ…QQQQ, ANTS…NAAP, and AAVA…HAAN. Low complexity-rich tracts occupy residues 396-412 and 450-462; these read QQSQVQQQQPQQQQQHC and SATPTAGAASGGS.

As to quaternary structure, homodimer. Interacts with esc, Trl, E(z), scm and ph-p in vitro. Found in vivo in an esc-containing complex, which may be the Esc/E(z) complex. Also found in vivo in a Pc-containing complex that may be the PRC1 complex, but does not interact with Pc directly. Interacts with cyclin CycG.

Its subcellular location is the nucleus. The protein resides in the cytoplasm. The protein localises to the cytoskeleton. It localises to the microtubule organizing center. It is found in the centrosome. Its subcellular location is the chromosome. Functionally, essential protein required for proper condensation of mitotic chromosomes and progression through mitosis. Binds to specific polytene chromosome sites, many of which are shared with the posterior sex combs (Psc) protein. Involved in maintaining Abd-B repression outside its normal expression domain. This chain is Centrosomal and chromosomal factor (corto), found in Drosophila melanogaster (Fruit fly).